We begin with the raw amino-acid sequence, 1042 residues long: Sarcoplasmic/endoplasmic reticulum calcium ATPase 2 (1042 aa).

Residues 1-48 (MENAHTKTVEEVLGHFGVNESTGLSLEQVKKLKERWGSNELPAEEGKT) lie on the Cytoplasmic side of the membrane. Ser-38 is subject to Phosphoserine. The helical transmembrane segment at 49-69 (LLELVIEQFEDLLVRILLLAA) threads the bilayer. Topologically, residues 70–89 (CISFVLAWFEEGEETITAFV) are lumenal. The chain crosses the membrane as a helical span at residues 90 to 110 (EPFVILLILVANAIVGVWQER). Over 111–253 (NAENAIEALK…QERTPLQQKL (143 aa)) the chain is Cytoplasmic. Residues 254–273 (DEFGEQLSKVISLICIAVWI) form a helical membrane-spanning segment. Over 274-295 (INIGHFNDPVHGGSWIRGAIYY) the chain is Lumenal. 2 positions are modified to 3'-nitrotyrosine: Tyr-294 and Tyr-295. A helical membrane pass occupies residues 296–313 (FKIAVALAVAAIPEGLPA). Ca(2+) is bound by residues Val-304, Ala-305, Ile-307, and Glu-309. Over 314-756 (VITTCLALGT…EEGRAIYNNM (443 aa)) the chain is Cytoplasmic. The 4-aspartylphosphate intermediate role is filled by Asp-351. Residues Asp-351 and Thr-353 each contribute to the Mg(2+) site. Thr-353 is a binding site for ATP. Thr-441 carries the phosphothreonine modification. ATP is bound by residues Glu-442, Arg-489, and Lys-514. Residue Ser-531 is modified to Phosphoserine. Arg-559 contributes to the ATP binding site. Residues 575 to 594 (MNLEDSANFIKYETNLTFVG) form an interaction with HAX1 region. Ser-580 bears the Phosphoserine mark. ATP contacts are provided by Thr-624, Gly-625, and Asp-626. Phosphoserine is present on Ser-663. The ATP site is built by Arg-677 and Lys-683. A Mg(2+)-binding site is contributed by Asp-702. Asn-705 lines the ATP pocket. Residues 757–776 (KQFIRYLISSNVGEVVCIFL) form a helical membrane-spanning segment. Ca(2+) is bound by residues Asn-767 and Glu-770. Residues 777 to 786 (TAALGFPEAL) are Lumenal-facing. The helical transmembrane segment at 787 to 807 (IPVQLLWVNLVTDGLPATALG) threads the bilayer. Residues 787-807 (IPVQLLWVNLVTDGLPATALG) are interaction with PLN. The interval 788–1042 (PVQLLWVNLV…DTNFSDMFWS (255 aa)) is interaction with TMEM64 and PDIA3. Asn-795, Thr-798, and Asp-799 together coordinate Ca(2+). The Cytoplasmic portion of the chain corresponds to 808–827 (FNPPDLDIMNKPPRNPKEPL). The helical transmembrane segment at 828-850 (ISGWLFFRYLAIGCYVGAATVGA) threads the bilayer. Residues 851 to 896 (AAWWFIAADGGPRVTFYQLSHFLQCKEDNPDFEGVDCAVFESPYPM) lie on the Lumenal side of the membrane. A disulfide bridge links Cys-875 with Cys-887. Residues 897–916 (TMALSVLVTIEMCNALNSLS) form a helical membrane-spanning segment. A Ca(2+)-binding site is contributed by Glu-907. Over 917 to 929 (ENQSLLRMPPWEN) the chain is Cytoplasmic. A helical transmembrane segment spans residues 930 to 948 (IWLVGSICLSMSLHFLILY). The tract at residues 931 to 942 (WLVGSICLSMSL) is interaction with PLN. Residues 949–963 (VEPLPLIFQITPLNL) are Lumenal-facing. The helical transmembrane segment at 964-984 (TQWLMVLKISLPVILMDETLK) threads the bilayer. The Cytoplasmic portion of the chain corresponds to 985–1042 (FVARNYLEPGKECVQPATKSCSFSACTDGISWPFVLLIMPLVIWVYSTDTNFSDMFWS).

The protein belongs to the cation transport ATPase (P-type) (TC 3.A.3) family. Type IIA subfamily. Interacts with sarcolipin (SLN); the interaction inhibits ATP2A2 Ca(2+) affinity. Interacts with phospholamban (PLN); the interaction inhibits ATP2A2 Ca(2+) affinity. Interacts with myoregulin (MRLN). Interacts with ARLN and ERLN; the interactions inhibit ATP2A2 Ca(2+) affinity. Interacts with STRIT1/DWORF; the interaction results in activation of ATP2A2. Interacts with the monomeric forms of SLN, PLN, ARLN, ERLN and STRI1/DWORF. Interacts with HAX1. Interacts with S100A8 and S100A9. Interacts with SLC35G1 and STIM1. Interacts with TMEM203. Interacts with TMEM64 and PDIA3. Interacts with TMX1. Interacts with TMX2. Interacts with VMP1; VMP1 competes with PLN and SLN to prevent them from forming an inhibitory complex with ATP2A2. Interacts with ULK1. Interacts with S100A1 in a Ca(2+)-dependent manner. Interacts with TUNAR. Interacts with FLVCR2; this interaction occurs in the absence of heme and promotes ATP2A2 proteasomal degradation; this complex is dissociated upon heme binding. Interacts with FNIP1. As to quaternary structure, interacts with TRAM2 (via C-terminus). It depends on Mg(2+) as a cofactor. Nitrated under oxidative stress. Nitration on the two tyrosine residues inhibits catalytic activity. Post-translationally, serotonylated on Gln residues by TGM2 in response to hypoxia, leading to its inactivation. Detected in heart left ventricle (at protein level). Isoform 2 is highly expressed in heart and slow twitch skeletal muscle. Isoform 1 is widely expressed.

The protein localises to the endoplasmic reticulum membrane. The protein resides in the sarcoplasmic reticulum membrane. The enzyme catalyses Ca(2+)(in) + ATP + H2O = Ca(2+)(out) + ADP + phosphate + H(+). Has different conformational states with differential Ca2+ affinity. The E1 conformational state (active form) shows high Ca(2+) affinity, while the E2 state exhibits low Ca(2+) affinity. Binding of ATP allosterically increases its affinity for subsequent binding of Ca2+. Reversibly inhibited by phospholamban (PLN) at low calcium concentrations. PLN inhibits ATP2A2 Ca(2+) affinity by disrupting its allosteric activation by ATP. Inhibited by sarcolipin (SLN) and myoregulin (MRLN). The inhibition is blocked by VMP1. Enhanced by STRIT1/DWORF; STRIT1 increases activity by displacing sarcolipin (SLN), phospholamban (PLN) and myoregulin (MRLN). Stabilizes SERCA2 in its E2 state. This magnesium-dependent enzyme catalyzes the hydrolysis of ATP coupled with the translocation of calcium from the cytosol to the sarcoplasmic reticulum lumen. Involved in autophagy in response to starvation. Upon interaction with VMP1 and activation, controls ER-isolation membrane contacts for autophagosome formation. Also modulates ER contacts with lipid droplets, mitochondria and endosomes. In coordination with FLVCR2 mediates heme-stimulated switching from mitochondrial ATP synthesis to thermogenesis. Functionally, involved in the regulation of the contraction/relaxation cycle. Acts as a regulator of TNFSF11-mediated Ca(2+) signaling pathways via its interaction with TMEM64 which is critical for the TNFSF11-induced CREB1 activation and mitochondrial ROS generation necessary for proper osteoclast generation. Association between TMEM64 and SERCA2 in the ER leads to cytosolic Ca(2+) spiking for activation of NFATC1 and production of mitochondrial ROS, thereby triggering Ca(2+) signaling cascades that promote osteoclast differentiation and activation. This chain is Sarcoplasmic/endoplasmic reticulum calcium ATPase 2 (ATP2A2), found in Sus scrofa (Pig).